A 163-amino-acid polypeptide reads, in one-letter code: Transmembrane protein 278 (163 aa).

The segment at 1-37 is disordered; sequence MSEQGRETEEEEGGGGASDTAPMLPRGPPDHQASALT. The next 2 helical transmembrane spans lie at 51–71 and 105–125; these read LLAG…LVLL and AALI…ASAV. Residues 136 to 148 show a composition bias toward pro residues; it reads LLPPPAGTPGPRR. Positions 136 to 156 are disordered; the sequence is LLPPPAGTPGPRRPPGRPDED.

The protein belongs to the TMEM88 family.

Its subcellular location is the membrane. This is Transmembrane protein 278 from Homo sapiens (Human).